Reading from the N-terminus, the 351-residue chain is Inhibin beta C chain (351 aa).

The signal sequence occupies residues 1 to 18 (MASSLLLALLFLTLATVV). The propeptide occupies 19 to 236 (NLKTDGPCPA…EGKHRVRRRG (218 aa)). Residues asparagine 110, asparagine 142, and asparagine 160 are each glycosylated (N-linked (GlcNAc...) asparagine). 4 cysteine pairs are disulfide-bonded: cysteine 239/cysteine 247, cysteine 246/cysteine 316, cysteine 275/cysteine 348, and cysteine 279/cysteine 350.

This sequence belongs to the TGF-beta family. Homodimeric or heterodimeric through association with alpha and beta subunits, linked by one or more disulfide bonds. Inhibins are heterodimers of one alpha and one beta subunit. Activins are homo- or heterodimers of beta subunits only.

Its subcellular location is the secreted. Its function is as follows. Inhibins and activins inhibit and activate, respectively, the secretion of follitropin by the pituitary gland. Inhibins/activins are involved in regulating a number of diverse functions such as hypothalamic and pituitary hormone secretion, gonadal hormone secretion, germ cell development and maturation, erythroid differentiation, insulin secretion, nerve cell survival, embryonic axial development or bone growth, depending on their subunit composition. Inhibins appear to oppose the functions of activins. The protein is Inhibin beta C chain (Inhbc) of Rattus norvegicus (Rat).